Here is a 61-residue protein sequence, read N- to C-terminus: Large ribosomal subunit protein bL28 (61 aa).

The tract at residues 1–26 is disordered; that stretch reads MAKDFVTGRKTTFGKKRSHALNQTNR.

Belongs to the bacterial ribosomal protein bL28 family.

The polypeptide is Large ribosomal subunit protein bL28 (Ligilactobacillus salivarius (strain UCC118) (Lactobacillus salivarius)).